The sequence spans 134 residues: Kinetochore-binding protein 3 (134 aa).

It is found in the nucleus. It localises to the chromosome. Its subcellular location is the centromere. The protein localises to the kinetochore. This is Kinetochore-binding protein 3 (kbp-3) from Caenorhabditis elegans.